A 365-amino-acid polypeptide reads, in one-letter code: Alanine racemase (365 aa).

Lys-36 acts as the Proton acceptor; specific for D-alanine in catalysis. The residue at position 36 (Lys-36) is an N6-(pyridoxal phosphate)lysine. Substrate is bound at residue Arg-132. The Proton acceptor; specific for L-alanine role is filled by Tyr-257. Residue Met-305 participates in substrate binding.

The protein belongs to the alanine racemase family. It depends on pyridoxal 5'-phosphate as a cofactor.

The enzyme catalyses L-alanine = D-alanine. The protein operates within amino-acid biosynthesis; D-alanine biosynthesis; D-alanine from L-alanine: step 1/1. Functionally, catalyzes the interconversion of L-alanine and D-alanine. May also act on other amino acids. This Xylella fastidiosa (strain Temecula1 / ATCC 700964) protein is Alanine racemase (alr).